A 225-amino-acid chain; its full sequence is uncharacterized protein (225 aa).

Residues 12 to 32 traverse the membrane as a helical segment; that stretch reads AGFMMIFVFVIASFLLVLLFF.

It is found in the cell membrane. This is an uncharacterized protein from Bacillus subtilis (strain 168).